The following is a 314-amino-acid chain: Olfactory receptor 9A4 (314 aa).

Over 1–24 (MLMNYSSATEFYLLGFPGSEELHH) the chain is Extracellular. N4 is a glycosylation site (N-linked (GlcNAc...) asparagine). The helical transmembrane segment at 25 to 45 (ILFAIFFFFYLVTLMGNTVII) threads the bilayer. The Cytoplasmic portion of the chain corresponds to 46–53 (MIVCVDKR). A helical membrane pass occupies residues 54–74 (LQSPMYFFLGHLSALEILVTT). The Extracellular portion of the chain corresponds to 75–99 (IIVPVMLWGLLLPGMQTIYLSACVV). C97 and C189 form a disulfide bridge. Residues 100–120 (QLFLYLAVGTTEFALLGAMAV) form a helical membrane-spanning segment. Residues 121–139 (DRYVAVCNPLRYNIIMNRH) are Cytoplasmic-facing. The chain crosses the membrane as a helical span at residues 140–160 (TCNFVVLVSWVFGFLFQIWPV). At 161 to 197 (YVMFQLTYCKSNVVNNFFCDRGQLLKLSCNNTLFTEF) the chain is on the extracellular side. N-linked (GlcNAc...) asparagine glycosylation is present at N190. A helical transmembrane segment spans residues 198-217 (ILFLMAVFVLFGSLIPTIVS). Residues 218 to 237 (NAYIISTILKIPSSSGRRKS) lie on the Cytoplasmic side of the membrane. The chain crosses the membrane as a helical span at residues 238–258 (FSTCASHFTCVVIGYGSCLFL). Topologically, residues 259–271 (YVKPKQTQAADYN) are extracellular. Residues 272–292 (WVVSLMVSVVTPFLNPFIFTL) form a helical membrane-spanning segment. The Cytoplasmic portion of the chain corresponds to 293 to 314 (RNDKVIEALRDGVKRCCQLFRN).

This sequence belongs to the G-protein coupled receptor 1 family.

The protein resides in the cell membrane. Functionally, odorant receptor. This is Olfactory receptor 9A4 (OR9A4) from Homo sapiens (Human).